Consider the following 162-residue polypeptide: Succinate dehydrogenase assembly factor 2, mitochondrial (162 aa).

The transit peptide at 1 to 35 (MHNMFPALTKTLSLQGYKIINSQTGSAAWSCGRRW) directs the protein to the mitochondrion.

Belongs to the SDHAF2 family. As to quaternary structure, interacts with SDH1 within the SDH catalytic dimer.

The protein localises to the mitochondrion matrix. Its function is as follows. Plays an essential role in the assembly of succinate dehydrogenase (SDH), an enzyme complex (also referred to as respiratory complex II) that is a component of both the tricarboxylic acid (TCA) cycle and the mitochondrial electron transport chain, and which couples the oxidation of succinate to fumarate with the reduction of ubiquinone (coenzyme Q) to ubiquinol. Required for flavinylation (covalent attachment of FAD) of the flavoprotein subunit SDH1 of the SDH catalytic dimer. It is unclear whether it participates in the chemistry of FAD attachment (enzymatic function) or acts as a chaperone that maintains SDH1 in a conformation that is susceptible to autocatalytic FAD attachment. Does not bind FAD or FADH(2) in vitro. Involved in sporulation. Required for the full activation of the early meiotic inducer IME1. The protein is Succinate dehydrogenase assembly factor 2, mitochondrial of Saccharomyces cerevisiae (strain ATCC 204508 / S288c) (Baker's yeast).